The primary structure comprises 546 residues: Chaperonin GroEL 1 (546 aa).

Residues threonine 30 to proline 33, lysine 51, aspartate 87 to threonine 91, glycine 415, asparagine 479 to alanine 481, and aspartate 495 each bind ATP.

The protein belongs to the chaperonin (HSP60) family. Forms a cylinder of 14 subunits composed of two heptameric rings stacked back-to-back. Interacts with the co-chaperonin GroES.

It localises to the cytoplasm. It catalyses the reaction ATP + H2O + a folded polypeptide = ADP + phosphate + an unfolded polypeptide.. In terms of biological role, together with its co-chaperonin GroES, plays an essential role in assisting protein folding. The GroEL-GroES system forms a nano-cage that allows encapsulation of the non-native substrate proteins and provides a physical environment optimized to promote and accelerate protein folding. The polypeptide is Chaperonin GroEL 1 (Vibrio vulnificus (strain CMCP6)).